The sequence spans 333 residues: MSGVKVRREDAKKVLELLKSVGILDGKRKAIRDEKYVIFPVTDTNIAKSLGLEVVDVELPMRPERQIYKNLEDLLPREIFKKLGRLDIVGDIAIVSIPDEILSEREVIVSAIRKLYPKVKVIARRGFHSGLYRIRELEVIWGENRLHTIHKENGVLIKVDLSKVFFNPRMKGERYRIAQLVNDGERILVPFAGVIPYPLVIARFKNVEVYAVEINEFAVKLAEENLELNRDRLKGKIKIIHGDVFEVLPNLPNFDRVVSPTPKGVDALSLTLSKAEKFLHYYDFVHESEIERFRERVLEECRRQGKECRVSVRKVSDYKPHVYKVCADVEILS.

S-adenosyl-L-methionine contacts are provided by residues R174, F191, 213-214 (EI), and 243-244 (DV).

This sequence belongs to the class I-like SAM-binding methyltransferase superfamily. TRM5/TYW2 family.

It localises to the cytoplasm. It catalyses the reaction guanosine(37) in tRNA + S-adenosyl-L-methionine = N(1)-methylguanosine(37) in tRNA + S-adenosyl-L-homocysteine + H(+). The enzyme catalyses 4-demethylwyosine(37) in tRNA(Phe) + S-adenosyl-L-methionine = isowyosine(37) in tRNA(Phe) + S-adenosyl-L-homocysteine + H(+). Functionally, catalyzes both the N1-methylation of guanosine and the C7-methylation of 4-demethylwyosine (imG-14) at position 37 in tRNA(Phe). This chain is tRNA (guanine(37)-N(1))/4-demethylwyosine(37)-methyltransferase Taw22, found in Pyrococcus abyssi (strain GE5 / Orsay).